The sequence spans 135 residues: MLSPKRTRFRKQHRGRMKGVSYRGNRICFGRYALQALEPAWITSRQIEAGRRAISRYARRGGKIWVRIFPDKPVTLRPAETRMGSGKGSPEYWVSVVKPDRILYEMGGVSETVARAAMEIAARKMPIRTKFVIAE.

It belongs to the universal ribosomal protein uL16 family. As to quaternary structure, part of the 50S ribosomal subunit.

The protein resides in the plastid. Its subcellular location is the chloroplast. The polypeptide is Large ribosomal subunit protein uL16c (Nymphaea alba (White water-lily)).